The following is a 110-amino-acid chain: Large ribosomal subunit protein uL22 (110 aa).

Belongs to the universal ribosomal protein uL22 family. As to quaternary structure, part of the 50S ribosomal subunit.

This protein binds specifically to 23S rRNA; its binding is stimulated by other ribosomal proteins, e.g. L4, L17, and L20. It is important during the early stages of 50S assembly. It makes multiple contacts with different domains of the 23S rRNA in the assembled 50S subunit and ribosome. In terms of biological role, the globular domain of the protein is located near the polypeptide exit tunnel on the outside of the subunit, while an extended beta-hairpin is found that lines the wall of the exit tunnel in the center of the 70S ribosome. The protein is Large ribosomal subunit protein uL22 of Acinetobacter baylyi (strain ATCC 33305 / BD413 / ADP1).